The sequence spans 1687 residues: Genome polyprotein (1687 aa).

Positions 1–13 are enriched in polar residues; that stretch reads MRMATPSSAPSVR. Residues 1 to 56 form a disordered region; it reads MRMATPSSAPSVRNTEKRKNKKASSKASVSFGAPSPLSSESEDEINYMTPPEQEAQ. Residues 1–116 are interaction with host MAP1LC3A/LC3; the sequence is MRMATPSSAP…FRRYPHLRPK (116 aa). An interaction with NTPase region spans residues 117–341; the sequence is EDRPDAPSHA…ISIFGEWQAE (225 aa). The interaction with NS4 stretch occupies residues 244 to 341; that stretch reads SPVQDWNVDP…ISIFGEWQAE (98 aa). Host ER membrane association regions lie at residues 261 to 292 and 302 to 341; these read KLRM…KPLN and WTFS…WQAE. Positions 342-518 are interaction with NS1-2, NS4 and homooligomerization; it reads GPFDLALDVV…GKTCFCQNLA (177 aa). In terms of domain architecture, SF3 helicase spans 476 to 641; the sequence is RISMARAAFE…DDARARAPGD (166 aa). 504-511 serves as a coordination point for ATP; the sequence is GRPGIGKT. An important for mitochondrion targeting region spans residues 595-700; sequence VIIITTNQQT…AVALVHERHD (106 aa). An acidic region spans residues 893-898; that stretch reads DEEYDE. Tyr896 is modified (O-(5'-phospho-RNA)-tyrosine). The interval 978 to 994 is interaction with host EIF4G; it reads WADDDRQVDYGEKINFE. The 178-residue stretch at 995-1172 folds into the Peptidase C37 domain; it reads APVSIWSRVV…AATHGEPTLE (178 aa). Active-site for 3CLpro activity residues include His1024, Asp1048, and Cys1133. A RdRp catalytic domain is found at 1416-1537; it reads RYHMDADYTR…STNLELDMVK (122 aa). Residues Asp1420 and Asp1422 each coordinate Mg(2+). An intrachain disulfide couples Cys1482 to Cys1484. Residues Asp1524, Glu1525, and Ser1569 each coordinate Mg(2+).

As to quaternary structure, homodimer. Interacts with NTPase; this interaction increases the proapoptotic activity of the NTPase and is crucial for the formation of the viral replication complex. Interacts with NS4; this interaction is crucial for the formation of the viral replication complex. Interacts (via N-terminus) with host VAPA. Interacts with host VAPB. In terms of assembly, monomer. Homooligomer. Interacts with NS1-2; this interaction increases the proapoptotic activity of the NTPase and is crucial for the formation of the viral replication complex. Interacts with NS4; this interaction increases the proapoptotic activity of the NTPase. Interacts with host G3BP1; this interaction leads to the redistribution of G3BP1 and its cellular partners to the viral replication complexes, thereby preventing the assembly of stress granules. As to quaternary structure, homodimer. Monomer; in solution. In terms of assembly, interacts with NTPase; this interaction increases the proapoptotic activity of the NTPase. Interacts with NS1-2; this interaction is crucial for the formation of the viral replication complex. Monomer. Interacts with the RNA-directed RNA polymerase; this interaction induces the multimerization of the RdRp and enhances its activity. Interacts with host IEF4E; this interaction plays a role in translation of viral proteins. Interacts (via C-terminus) with host IEF4G1 (via central domain); this interaction plays a role in translation of viral proteins. As to quaternary structure, homohexamer; also forms fibrous hexameric oligomer. Interacts with the viral genome-linked protein; this interaction induces the multimerization of the RdRp and enhances its activity. Requires Mg(2+) as cofactor. Mn(2+) serves as cofactor. Specific enzymatic cleavages in vivo yield mature proteins. 3CLpro is first autocatalytically cleaved, then processes the whole polyprotein. In terms of processing, cleaved by host CASP3/caspase 3 at 18-22 h.p.i. The cleavage allows NS1 secretion, which is essential for intestinal infection and resistance to IFN-lambda. Post-translationally, VPg is uridylylated by the polymerase and is covalently attached to the 5'-end of the polyadenylated genomic and subgenomic RNAs. This uridylylated form acts as a nucleotide-peptide primer for the polymerase.

Its subcellular location is the host endoplasmic reticulum membrane. The protein resides in the secreted. The protein localises to the host endosome membrane. It is found in the host mitochondrion. It localises to the host cytoplasm. Its subcellular location is the host perinuclear region. The enzyme catalyses a ribonucleoside 5'-triphosphate + H2O = a ribonucleoside 5'-diphosphate + phosphate + H(+). The catalysed reaction is Endopeptidase with a preference for cleavage when the P1 position is occupied by Glu-|-Xaa and the P1' position is occupied by Gly-|-Yaa.. It carries out the reaction RNA(n) + a ribonucleoside 5'-triphosphate = RNA(n+1) + diphosphate. With respect to regulation, inhibited by Suramin, Suramin-related compounds and NF023. Inhibited by PPNDS. Its function is as follows. Induces the proliferation of the host smooth ER membranes forming long tubular structures. These remodeled membranes probably form the viral factories that contain the replication complex. May play a role in viral replication by interacting with host VAPA, a vesicle-associated membrane protein that plays a role in SNARE-mediated vesicle fusion. This interaction may target replication complex to intracellular membranes. Promotes intestinal tropism and persistent fecal shedding in strain CR6. This function requires Glu-94 and is present in persistant strains. Functionally, displays NTPase activity, but probably no helicase activity. Displays RNA chaperone-like activity and destabilizes dsRNA. Induces the formation of convoluted membranes derived from the host ER. These remodeled membranes probably form the viral factories that contain the replication complex. Initiates host cell death by targeting the mitochondrial outer membrane, leading to the permeabilization of mitochondria, programmed host cell death and viral egress. Externalization of host cardiolipin seems to be involved in the process. Probably plays a role in preventing the assembly of host stress granules. In terms of biological role, probable key protein responsible for the formation of membrane alterations by the virus. Induces the formation of convoluted membranes derived from the host ER. These remodeled membranes probably form the viral factories that contain the replication complex. May play a role in targeting replication complex to intracellular membranes. Its function is as follows. Viral genome-linked protein is covalently linked to the 5'-end of the positive-strand, negative-strand genomic RNAs and subgenomic RNA. Acts as a genome-linked replication primer. May recruit ribosome to viral RNA thereby promoting viral proteins translation. Interacts with host translation initiation complex to allow the translation of viral proteins. Induces the formation of aggregates of RNA-directed RNA polymerase in the presence of RNA. Through its interaction with the viral RNA-directed RNA polymerase, plays a crucial role in enhancing the polymerase activity. Processes the polyprotein. 3CLpro-RdRp is first released by autocleavage, then all other proteins are cleaved. May cleave host polyadenylate-binding protein thereby inhibiting cellular translation. Does not cleave host G3BP1. Functionally, replicates genomic and antigenomic RNA by recognizing replications specific signals. Also transcribes a subgenomic mRNA by initiating RNA synthesis internally on antigenomic RNA. This sgRNA codes for structural proteins. Catalyzes the covalent attachment VPg with viral RNAs. The protein is Genome polyprotein of Norovirus (isolate Mouse/NoV/United States/MNV1/2002/GV) (MNV-1).